Consider the following 878-residue polypeptide: AP-2 complex subunit alpha (878 aa).

This sequence belongs to the adaptor complexes large subunit family. As to quaternary structure, adaptor protein complex 2 (AP-2) is a heterotetramer composed of two large adaptins (alpha-type subunit apl3 and beta-type subunit apl1), a medium chain (mu-type subunit apm4) and a small adaptin (sigma-type subunit aps2).

Its subcellular location is the cell membrane. It is found in the membrane. The protein localises to the coated pit. In terms of biological role, adaptins are components of the adaptor complexes which link clathrin to receptors in coated vesicles. Clathrin-associated protein complexes are believed to interact with the cytoplasmic tails of membrane proteins, leading to their selection and concentration. Alpha adaptin is a subunit of the plasma membrane adaptor. This chain is AP-2 complex subunit alpha (apl3), found in Schizosaccharomyces pombe (strain 972 / ATCC 24843) (Fission yeast).